The chain runs to 404 residues: Glycosylated lysosomal membrane protein (404 aa).

The signal sequence occupies residues Met1–Gly35. The Lumenal portion of the chain corresponds to Glu36–Gly370. Asn64, Asn85, Asn94, Asn133, Asn157, Asn166, Asn185, Asn228, and Asn331 each carry an N-linked (GlcNAc...) asparagine glycan. Residues Ile371–Leu391 form a helical membrane-spanning segment. The Cytoplasmic segment spans residues Leu392 to Asn404. A Lysosomal targeting motif motif is present at residues Tyr400–Asn404.

It belongs to the GLMP family. As to quaternary structure, interacts (via lumenal domain) with lysosomal protein MFSD1; the interaction starts while both proteins are still in the endoplasmic reticulum and is required for stabilization of MFSD1 in lysosomes but has no direct effect on its targeting to lysosomes or transporter activity. Post-translationally, highly N-glycosylated. N-glycosylation is essential for GLMP stability and for MFSD1 lysosomal localization. As to expression, detected in brain, heart, liver, kidney, lung, intestine, testis and spleen. Expressed at highest levels in kidney cortex. However, another study reports highest expression levels in lung. Expressed in myoblasts with expression increasing during differentiation into myotubes.

The protein resides in the lysosome membrane. Required to protect lysosomal transporter MFSD1 from lysosomal proteolysis and for MFSD1 lysosomal localization. This chain is Glycosylated lysosomal membrane protein, found in Mus musculus (Mouse).